Consider the following 386-residue polypeptide: Putative matrix metalloproteinase (386 aa).

An N-terminal signal peptide occupies residues 1–34; the sequence is MPTAHFQHSIRYLNVTNMLIFSIISFLLIYQTNS. N-linked (GlcNAc...) asparagine; by host glycans are attached at residues Asn-14 and Asn-58. His-186 contacts Zn(2+). Residue Glu-187 is part of the active site. Residues His-190 and His-196 each contribute to the Zn(2+) site. Residues 235-258 form a disordered region; that stretch reads NEQSTHQSTRHRPHRRPSPDGSCR.

The protein belongs to the peptidase M10A family. Zn(2+) serves as cofactor.

The polypeptide is Putative matrix metalloproteinase (Spodoptera frugiperda (Fall armyworm)).